Consider the following 169-residue polypeptide: Phosphopantetheine adenylyltransferase (169 aa).

Thr-14 is a binding site for substrate. ATP-binding positions include Thr-14–Phe-15 and His-22. 3 residues coordinate substrate: Lys-46, Leu-78, and Arg-92. ATP is bound by residues Gly-93–Arg-95, Glu-103, and His-128–Ser-134.

It belongs to the bacterial CoaD family. In terms of assembly, homohexamer. Requires Mg(2+) as cofactor.

The protein localises to the cytoplasm. It catalyses the reaction (R)-4'-phosphopantetheine + ATP + H(+) = 3'-dephospho-CoA + diphosphate. It functions in the pathway cofactor biosynthesis; coenzyme A biosynthesis; CoA from (R)-pantothenate: step 4/5. Its function is as follows. Reversibly transfers an adenylyl group from ATP to 4'-phosphopantetheine, yielding dephospho-CoA (dPCoA) and pyrophosphate. The chain is Phosphopantetheine adenylyltransferase from Stenotrophomonas maltophilia (strain R551-3).